A 138-amino-acid polypeptide reads, in one-letter code: MARTKQTARKSTGGKAPRKQLATKAARKQAPSQVSGGVKKPHRYRPGTVALREIRRYQKSTELLIRKLPFQRLVREIAQDFKTDLRFQSSAIGALQEASEAYLVSLFEDTNLAAIHAKRVTIQPKDLQLARRLRGERS.

Residues 1–49 (MARTKQTARKSTGGKAPRKQLATKAARKQAPSQVSGGVKKPHRYRPGTV) are disordered. Position 5 is an N6,N6,N6-trimethyllysine; alternate (lysine 5). Residue lysine 5 is modified to N6,N6-dimethyllysine; alternate. 2 positions are modified to N6-methyllysine; alternate: lysine 5 and lysine 10. Residue lysine 10 is modified to N6-acetyllysine; alternate. Serine 11 carries the post-translational modification Phosphoserine. Lysine 15 carries the N6,N6-dimethyllysine; alternate modification. Lysine 15, lysine 19, lysine 24, lysine 28, and lysine 39 each carry N6-methyllysine; alternate. Lysine 15, lysine 19, lysine 24, lysine 28, and lysine 39 each carry N6-acetyllysine; alternate. N6,N6,N6-trimethyllysine; alternate is present on residues lysine 28 and lysine 39. Lysine 28 and lysine 39 each carry N6,N6-dimethyllysine; alternate. Residues lysine 59 and lysine 67 each carry the N6-acetyllysine modification. Lysine 82 is subject to N6,N6,N6-trimethyllysine; alternate. N6,N6-dimethyllysine; alternate is present on lysine 82. Lysine 82 carries the post-translational modification N6-methyllysine; alternate.

The protein belongs to the histone H3 family. As to quaternary structure, the nucleosome is a histone octamer containing two molecules each of H2A, H2B, H3 and H4 assembled in one H3-H4 heterotetramer and two H2A-H2B heterodimers. The octamer wraps approximately 147 bp of DNA. In terms of processing, phosphorylated to form H3S10ph. H3S10ph promotes subsequent H3K14ac formation and is required for transcriptional activation through TBP recruitment to the promoters. Mono-, di- and trimethylated by the COMPASS complex to form H3K4me1/2/3. H3K4me activates gene expression by regulating transcription elongation and plays a role in telomere length maintenance. H3K4me enrichment correlates with transcription levels, and occurs in a 5' to 3' gradient with H3K4me3 enrichment at the 5'-end of genes, shifting to H3K4me2 and then H3K4me1. Methylated by SET2 to form H3K36me. H3K36me represses gene expression. Methylated by DOT1 to form H3K79me. H3K79me is required for association of SIR proteins with telomeric regions and for telomeric silencing. The COMPASS-mediated formation of H3K4me2/3 and the DOT1-mediated formation of H3K79me require H2BK123ub1. Post-translationally, acetylation of histone H3 leads to transcriptional activation. H3K14ac formation by GCN5 is promoted by H3S10ph. H3K14ac can also be formed by ESA1. H3K56ac formation occurs predominantly in newly synthesized H3 molecules during G1, S and G2/M of the cell cycle and may be involved in DNA repair.

The protein resides in the nucleus. The protein localises to the chromosome. Its function is as follows. Core component of nucleosome. Nucleosomes wrap and compact DNA into chromatin, limiting DNA accessibility to the cellular machineries which require DNA as a template. Histones thereby play a central role in transcription regulation, DNA repair, DNA replication and chromosomal stability. DNA accessibility is regulated via a complex set of post-translational modifications of histones, also called histone code, and nucleosome remodeling. The protein is Histone H3 (HHT1) of Cryptococcus neoformans var. neoformans serotype D (strain B-3501A) (Filobasidiella neoformans).